Reading from the N-terminus, the 370-residue chain is Subtilisin-like protease (370 aa).

The signal sequence occupies residues 1–17 (MIASIVFFIVLVDGVAT). Residues Asp-13, His-35, and Ser-190 each act as charge relay system in the active site. In terms of domain architecture, Peptidase S8 spans 18-261 (GSPNALVTDF…FGEVSPSRLE (244 aa)). The region spanning 240–370 (RVTDRWTHRN…TTEGTCHGIR (131 aa)) is the P/Homo B domain.

Belongs to the peptidase S8 family.

The chain is Subtilisin-like protease (ORF47) from Ictalurid herpesvirus 1 (strain Auburn) (IcHV-1).